We begin with the raw amino-acid sequence, 335 residues long: Transmembrane protein 120B-B (335 aa).

Positions 1-39 form a coiled coil; it reads MSLQKCQEEWGELEKEFQQLQETHKVYKQKLEELSSLQN. 6 helical membrane passes run 100-116, 130-150, 157-177, 193-213, 268-288, and 300-320; these read SLYL…TLLS, FKLY…FVLH, VFNF…SILI, VSTF…YQMF, FLLP…MTLF, and QVFV…LTTL.

Belongs to the TMEM120 family.

The protein localises to the nucleus inner membrane. Its function is as follows. Necessary for efficient adipogenesis. Does not show ion channel activity. This Xenopus laevis (African clawed frog) protein is Transmembrane protein 120B-B (tmem120b-b).